Consider the following 286-residue polypeptide: ATP synthase gamma chain (286 aa).

Belongs to the ATPase gamma chain family. In terms of assembly, F-type ATPases have 2 components, CF(1) - the catalytic core - and CF(0) - the membrane proton channel. CF(1) has five subunits: alpha(3), beta(3), gamma(1), delta(1), epsilon(1). CF(0) has three main subunits: a, b and c.

The protein resides in the cell inner membrane. Produces ATP from ADP in the presence of a proton gradient across the membrane. The gamma chain is believed to be important in regulating ATPase activity and the flow of protons through the CF(0) complex. The polypeptide is ATP synthase gamma chain (Shewanella putrefaciens (strain CN-32 / ATCC BAA-453)).